An 88-amino-acid polypeptide reads, in one-letter code: Small ribosomal subunit protein bS20 (88 aa).

It belongs to the bacterial ribosomal protein bS20 family.

Its function is as follows. Binds directly to 16S ribosomal RNA. In Desulforudis audaxviator (strain MP104C), this protein is Small ribosomal subunit protein bS20.